A 150-amino-acid polypeptide reads, in one-letter code: Large ribosomal subunit protein bL9 (150 aa).

It belongs to the bacterial ribosomal protein bL9 family.

Its function is as follows. Binds to the 23S rRNA. The polypeptide is Large ribosomal subunit protein bL9 (Idiomarina loihiensis (strain ATCC BAA-735 / DSM 15497 / L2-TR)).